The following is a 353-amino-acid chain: Photosystem II protein D1 (353 aa).

Thr-2 carries the post-translational modification N-acetylthreonine. Residue Thr-2 is modified to Phosphothreonine. The next 3 helical transmembrane spans lie at 29–46 (YIGW…TATS), 118–133 (HFLL…EWEL), and 142–156 (WIAV…AATA). A chlorophyll a-binding site is contributed by His-118. Pheophytin a is bound at residue Tyr-126. Residues Asp-170 and Glu-189 each coordinate [CaMn4O5] cluster. A helical membrane pass occupies residues 197 to 218 (FHMLGVAGVFGGSLFSAMHGSL). Residue His-198 coordinates chlorophyll a. Residues His-215 and 264–265 (SF) each bind a quinone. Residue His-215 coordinates Fe cation. His-272 provides a ligand contact to Fe cation. The helical transmembrane segment at 274–288 (FLAAWPVVGIWFTAL) threads the bilayer. The [CaMn4O5] cluster site is built by His-332, Glu-333, Asp-342, and Ala-344. Residues 345-353 (VVEAPSTNG) constitute a propeptide that is removed on maturation.

The protein belongs to the reaction center PufL/M/PsbA/D family. As to quaternary structure, PSII is composed of 1 copy each of membrane proteins PsbA, PsbB, PsbC, PsbD, PsbE, PsbF, PsbH, PsbI, PsbJ, PsbK, PsbL, PsbM, PsbT, PsbX, PsbY, PsbZ, Psb30/Ycf12, at least 3 peripheral proteins of the oxygen-evolving complex and a large number of cofactors. It forms dimeric complexes. Requires The D1/D2 heterodimer binds P680, chlorophylls that are the primary electron donor of PSII, and subsequent electron acceptors. It shares a non-heme iron and each subunit binds pheophytin, quinone, additional chlorophylls, carotenoids and lipids. D1 provides most of the ligands for the Mn4-Ca-O5 cluster of the oxygen-evolving complex (OEC). There is also a Cl(-1) ion associated with D1 and D2, which is required for oxygen evolution. The PSII complex binds additional chlorophylls, carotenoids and specific lipids. as cofactor. Tyr-161 forms a radical intermediate that is referred to as redox-active TyrZ, YZ or Y-Z. In terms of processing, C-terminally processed by CTPA; processing is essential to allow assembly of the oxygen-evolving complex and thus photosynthetic growth.

The protein localises to the plastid. The protein resides in the chloroplast thylakoid membrane. It carries out the reaction 2 a plastoquinone + 4 hnu + 2 H2O = 2 a plastoquinol + O2. Functionally, photosystem II (PSII) is a light-driven water:plastoquinone oxidoreductase that uses light energy to abstract electrons from H(2)O, generating O(2) and a proton gradient subsequently used for ATP formation. It consists of a core antenna complex that captures photons, and an electron transfer chain that converts photonic excitation into a charge separation. The D1/D2 (PsbA/PsbD) reaction center heterodimer binds P680, the primary electron donor of PSII as well as several subsequent electron acceptors. In Aethionema grandiflorum (Persian stone-cress), this protein is Photosystem II protein D1.